The primary structure comprises 697 residues: Trishanku (697 aa).

The tract at residues 1-94 (MEIEPVVRIS…NNNSNSNGTD (94 aa)) is disordered. The span at 12–47 (NGNNNQNNNNNNNNNTNNNSNNNNNNNNSSNINSTN) shows a compositional bias: low complexity. The span at 58–72 (KMISNINNQKSPNPL) shows a compositional bias: polar residues. Residues 73–91 (NSSVDDNNNTNNNNNSNSN) are compositionally biased toward low complexity. In terms of domain architecture, BTB spans 122-189 (SDVIFKVGDR…ICIGILDLDY (68 aa)). The tract at residues 311–455 (IQQQQQQQQQ…DSANDDYEYS (145 aa)) is disordered. Low complexity predominate over residues 312 to 331 (QQQQQQQQQQLQSANGASGK). Residues 332-344 (SHGKRSSSSHLKK) are compositionally biased toward basic residues. Residues 353 to 363 (GSCSSRCSSRR) are compositionally biased toward low complexity. Residues 416–453 (DDFENDSEDGDDDDEDDDEDDDFTDDDDKDDSANDDYE) are compositionally biased toward acidic residues.

In terms of tissue distribution, expressed strongly in presumptive spore (prespore or psp) cells during the late G2 phase of cell cycle. Present at a low level in vegetative cells.

In terms of biological role, required for normal morphogenesis and cell-type stability. The sequence is that of Trishanku (triA) from Dictyostelium discoideum (Social amoeba).